The primary structure comprises 358 residues: MTRLLIAASGTGGHLFPALAVAEALPEDWQVRWLGVPDRLETQLVPARYSLFTVNAGGLQGSRLSKAVQLLLLLAAGVSVARLIRRERIQLVLSTGGYIAAPAILAARFCGVPTVLHEANAIPGRVTRLLGRFCGAVAVGLPAAAGRIPGSRPLMTGMPVRADFLQSQPCPAWVPEGRGPLLVVIGGSQGAVGLNRMVRAVLPPLLEQGCRVVHLTGRNDTEVGQVQHPLLVEQPFSDEIPGLLQHADLAVSRAGAGSLSELAVCGTPTILVPFPQAADQHQEANAACAAEQGGAVIVHQHEPEATVLQQTIQCLLGHRLGHPDADPSLLPSMREGMERLAIRDADQRLVDLLQSLLD.

UDP-N-acetyl-alpha-D-glucosamine-binding positions include 11 to 13, N120, R161, S188, and Q282; that span reads TGG.

This sequence belongs to the glycosyltransferase 28 family. MurG subfamily.

The protein localises to the cell inner membrane. The catalysed reaction is di-trans,octa-cis-undecaprenyl diphospho-N-acetyl-alpha-D-muramoyl-L-alanyl-D-glutamyl-meso-2,6-diaminopimeloyl-D-alanyl-D-alanine + UDP-N-acetyl-alpha-D-glucosamine = di-trans,octa-cis-undecaprenyl diphospho-[N-acetyl-alpha-D-glucosaminyl-(1-&gt;4)]-N-acetyl-alpha-D-muramoyl-L-alanyl-D-glutamyl-meso-2,6-diaminopimeloyl-D-alanyl-D-alanine + UDP + H(+). The protein operates within cell wall biogenesis; peptidoglycan biosynthesis. Its function is as follows. Cell wall formation. Catalyzes the transfer of a GlcNAc subunit on undecaprenyl-pyrophosphoryl-MurNAc-pentapeptide (lipid intermediate I) to form undecaprenyl-pyrophosphoryl-MurNAc-(pentapeptide)GlcNAc (lipid intermediate II). The polypeptide is UDP-N-acetylglucosamine--N-acetylmuramyl-(pentapeptide) pyrophosphoryl-undecaprenol N-acetylglucosamine transferase (Parasynechococcus marenigrum (strain WH8102)).